We begin with the raw amino-acid sequence, 61 residues long: Small ribosomal subunit protein eS31 (61 aa).

Residues C22, C25, C38, and C41 each contribute to the Zn(2+) site. Residues 22–41 (CPRCGSFMAEHKDRYHCGKC) form a C4-type zinc finger.

Belongs to the eukaryotic ribosomal protein eS31 family. In terms of assembly, part of the 30S ribosomal subunit. The cofactor is Zn(2+).

This chain is Small ribosomal subunit protein eS31, found in Nanoarchaeum equitans (strain Kin4-M).